The sequence spans 420 residues: Transcription factor dbaG (420 aa).

The protein resides in the nucleus. In terms of biological role, transcription factor that coregulates the expression of the gene cluster that mediates the biosynthesis of the antibiotic 2,4- dihydroxy-3-methyl-6-(2-oxopropyl)benzaldehyde (DHMBA) and its derivatives. Specifically positively regulates the expression of the FAD-dependent oxidoreductase dbaF. This is Transcription factor dbaG from Emericella nidulans (strain FGSC A4 / ATCC 38163 / CBS 112.46 / NRRL 194 / M139) (Aspergillus nidulans).